Reading from the N-terminus, the 518-residue chain is GMP synthase [glutamine-hydrolyzing] (518 aa).

In terms of domain architecture, Glutamine amidotransferase type-1 spans 13–203 (KIIVLDFGSQ…ALNVCGCKGD (191 aa)). Cysteine 90 acts as the Nucleophile in catalysis. Catalysis depends on residues histidine 177 and glutamate 179. A GMPS ATP-PPase domain is found at 204-393 (WTMENFSEVE…LGMPDAIVWR (190 aa)). 231–237 (SGGVDSS) contacts ATP.

Homodimer.

It catalyses the reaction XMP + L-glutamine + ATP + H2O = GMP + L-glutamate + AMP + diphosphate + 2 H(+). It participates in purine metabolism; GMP biosynthesis; GMP from XMP (L-Gln route): step 1/1. Its function is as follows. Catalyzes the synthesis of GMP from XMP. This chain is GMP synthase [glutamine-hydrolyzing], found in Listeria monocytogenes serovar 1/2a (strain ATCC BAA-679 / EGD-e).